The sequence spans 66 residues: MLYPSIDLLMQKVDSKYKLVTVVAKRARELQDGAELMVKKPVSKKFVGQALEEIAGDKVELVEEEK.

The protein belongs to the RNA polymerase subunit omega family. As to quaternary structure, the RNAP catalytic core consists of 2 alpha, 1 beta, 1 beta' and 1 omega subunit. When a sigma factor is associated with the core the holoenzyme is formed, which can initiate transcription.

The enzyme catalyses RNA(n) + a ribonucleoside 5'-triphosphate = RNA(n+1) + diphosphate. Functionally, promotes RNA polymerase assembly. Latches the N- and C-terminal regions of the beta' subunit thereby facilitating its interaction with the beta and alpha subunits. This Geobacillus kaustophilus (strain HTA426) protein is DNA-directed RNA polymerase subunit omega.